The primary structure comprises 393 residues: NAD(P)H-quinone oxidoreductase subunit H, chloroplastic (393 aa).

This sequence belongs to the complex I 49 kDa subunit family. As to quaternary structure, NDH is composed of at least 16 different subunits, 5 of which are encoded in the nucleus.

It localises to the plastid. The protein localises to the chloroplast thylakoid membrane. The catalysed reaction is a plastoquinone + NADH + (n+1) H(+)(in) = a plastoquinol + NAD(+) + n H(+)(out). It carries out the reaction a plastoquinone + NADPH + (n+1) H(+)(in) = a plastoquinol + NADP(+) + n H(+)(out). NDH shuttles electrons from NAD(P)H:plastoquinone, via FMN and iron-sulfur (Fe-S) centers, to quinones in the photosynthetic chain and possibly in a chloroplast respiratory chain. The immediate electron acceptor for the enzyme in this species is believed to be plastoquinone. Couples the redox reaction to proton translocation, and thus conserves the redox energy in a proton gradient. This Guizotia abyssinica (Niger) protein is NAD(P)H-quinone oxidoreductase subunit H, chloroplastic.